Here is a 395-residue protein sequence, read N- to C-terminus: Protein HIGH CHLOROPHYLL FLUORESCENCE PHENOTYPE 244, chloroplastic (395 aa).

Residues 1 to 64 constitute a chloroplast transit peptide; that stretch reads MASLRLPAQL…ERSIVVPVTC (64 aa).

The protein belongs to the NmrA-type oxidoreductase family. Component of a high molecular weight complex containing OHP1, OHP2 and HCF244, and PSII core proteins D1/D2, HCF136 and HCF173. Interacts with OHP1. Forms a trimeric complex with OHP1 and OHP2 that mutually stabilizes each subunit.

The protein resides in the plastid. It is found in the chloroplast stroma. Its subcellular location is the chloroplast thylakoid membrane. Auxiliary factor required, together with HCF173, for the biogenesis of photosystem II (PSII), especially for the synthesis of the reaction center proteins (e.g. D1), via the regulation of the corresponding mRNA (e.g. psbA) translation initiation (ribosomal loading) and stabilization. Forms a trimeric complex with OHP1 and OHP2 that is required to promote PSII core subunit assembly. The trimeric complex forms a transient PSII reaction center-like complex with PsbA, PsbD, PsbE, PsbF and PsbI subunits in thylakoids for early assembly of PSII as well as PSII repair. The trimeric complex is required for the recruitment of ribosomes to the psbA mRNA during PSII biogenesis and repair. The polypeptide is Protein HIGH CHLOROPHYLL FLUORESCENCE PHENOTYPE 244, chloroplastic (Arabidopsis thaliana (Mouse-ear cress)).